The chain runs to 223 residues: Ribose-5-phosphate isomerase A (223 aa).

Residues 32-35, 85-88, and 98-101 contribute to the substrate site; these read TGST, DGAD, and KGGG. The active-site Proton acceptor is the E107. Position 125 (K125) interacts with substrate.

The protein belongs to the ribose 5-phosphate isomerase family. In terms of assembly, homodimer.

It carries out the reaction aldehydo-D-ribose 5-phosphate = D-ribulose 5-phosphate. It functions in the pathway carbohydrate degradation; pentose phosphate pathway; D-ribose 5-phosphate from D-ribulose 5-phosphate (non-oxidative stage): step 1/1. In terms of biological role, catalyzes the reversible conversion of ribose-5-phosphate to ribulose 5-phosphate. The sequence is that of Ribose-5-phosphate isomerase A from Stutzerimonas stutzeri (strain A1501) (Pseudomonas stutzeri).